An 83-amino-acid polypeptide reads, in one-letter code: Cobrotoxin homolog (83 aa).

Positions 1-21 are cleaved as a signal peptide; the sequence is METLLLTLLVVTIVCLDLGYT. 4 disulfides stabilise this stretch: C24–C45, C38–C62, C64–C75, and C76–C81.

The protein belongs to the three-finger toxin family. Short-chain subfamily. Type I alpha-neurotoxin sub-subfamily. Expressed by the venom gland.

Its subcellular location is the secreted. Functionally, binds to muscle nicotinic acetylcholine receptor (nAChR) and inhibit acetylcholine from binding to the receptor, thereby impairing neuromuscular transmission. In Naja naja (Indian cobra), this protein is Cobrotoxin homolog.